We begin with the raw amino-acid sequence, 556 residues long: Arginine--tRNA ligase (556 aa).

The 'HIGH' region signature appears at 132-142; sequence ANPTGDLHLGH.

It belongs to the class-I aminoacyl-tRNA synthetase family. Monomer.

The protein resides in the cytoplasm. It catalyses the reaction tRNA(Arg) + L-arginine + ATP = L-arginyl-tRNA(Arg) + AMP + diphosphate. The protein is Arginine--tRNA ligase of Listeria monocytogenes serovar 1/2a (strain ATCC BAA-679 / EGD-e).